A 56-amino-acid chain; its full sequence is MAVQQNKKSRSKRGMRRSHDALSTAQLSVDATSGELHRRHNVTADGFYRGQKVINK.

A disordered region spans residues 1–37; the sequence is MAVQQNKKSRSKRGMRRSHDALSTAQLSVDATSGELH. Positions 7–16 are enriched in basic residues; the sequence is KKSRSKRGMR. Residues 21–31 show a composition bias toward polar residues; that stretch reads ALSTAQLSVDA.

The protein belongs to the bacterial ribosomal protein bL32 family.

The protein is Large ribosomal subunit protein bL32 of Shewanella pealeana (strain ATCC 700345 / ANG-SQ1).